The primary structure comprises 286 residues: 4-hydroxybenzoate octaprenyltransferase (286 aa).

Transmembrane regions (helical) follow at residues Ile20–Leu40, Ile43–Ile63, Leu96–Val116, Phe142–Val162, Trp167–Val187, Gln210–Ala230, Ile235–Phe255, and Phe266–Ile286.

The protein belongs to the UbiA prenyltransferase family. It depends on Mg(2+) as a cofactor.

The protein localises to the cell inner membrane. The catalysed reaction is all-trans-octaprenyl diphosphate + 4-hydroxybenzoate = 4-hydroxy-3-(all-trans-octaprenyl)benzoate + diphosphate. Its pathway is cofactor biosynthesis; ubiquinone biosynthesis. Catalyzes the prenylation of para-hydroxybenzoate (PHB) with an all-trans polyprenyl group. Mediates the second step in the final reaction sequence of ubiquinone-8 (UQ-8) biosynthesis, which is the condensation of the polyisoprenoid side chain with PHB, generating the first membrane-bound Q intermediate 3-octaprenyl-4-hydroxybenzoate. The chain is 4-hydroxybenzoate octaprenyltransferase from Shewanella frigidimarina (strain NCIMB 400).